The following is a 314-amino-acid chain: Carbamate kinase (314 aa).

It belongs to the carbamate kinase family. As to quaternary structure, homodimer.

The protein resides in the cytoplasm. The catalysed reaction is hydrogencarbonate + NH4(+) + ATP = carbamoyl phosphate + ADP + H2O + H(+). This chain is Carbamate kinase (cpkA), found in Pyrococcus horikoshii (strain ATCC 700860 / DSM 12428 / JCM 9974 / NBRC 100139 / OT-3).